The chain runs to 527 residues: Peptide chain release factor 3 (527 aa).

The tr-type G domain occupies 9 to 277 (AKRRTFAIIS…CIVDWAPQPL (269 aa)). GTP is bound by residues 18 to 25 (SHPDAGKT), 86 to 90 (DTPGH), and 140 to 143 (NKLD).

The protein belongs to the TRAFAC class translation factor GTPase superfamily. Classic translation factor GTPase family. PrfC subfamily.

The protein localises to the cytoplasm. Its function is as follows. Increases the formation of ribosomal termination complexes and stimulates activities of RF-1 and RF-2. It binds guanine nucleotides and has strong preference for UGA stop codons. It may interact directly with the ribosome. The stimulation of RF-1 and RF-2 is significantly reduced by GTP and GDP, but not by GMP. The sequence is that of Peptide chain release factor 3 from Pseudomonas aeruginosa (strain LESB58).